Consider the following 541-residue polypeptide: Phosphoenolpyruvate carboxykinase (ATP) (541 aa).

The substrate site is built by Arg-64, Tyr-206, and Lys-212. Residues Lys-212, His-231, and Gly-247 to Thr-255 contribute to the ATP site. Residues Lys-212 and His-231 each contribute to the Mn(2+) site. Asp-268 provides a ligand contact to Mn(2+). Glu-296, Arg-332, and Thr-454 together coordinate ATP. Arg-332 lines the substrate pocket.

This sequence belongs to the phosphoenolpyruvate carboxykinase (ATP) family. In terms of assembly, monomer. Requires Mn(2+) as cofactor.

It is found in the cytoplasm. It catalyses the reaction oxaloacetate + ATP = phosphoenolpyruvate + ADP + CO2. It participates in carbohydrate biosynthesis; gluconeogenesis. In terms of biological role, involved in the gluconeogenesis. Catalyzes the conversion of oxaloacetate (OAA) to phosphoenolpyruvate (PEP) through direct phosphoryl transfer between the nucleoside triphosphate and OAA. This is Phosphoenolpyruvate carboxykinase (ATP) from Wigglesworthia glossinidia brevipalpis.